The following is a 253-amino-acid chain: Phosphoglycerate mutase 2 (253 aa).

A Phosphothreonine modification is found at Thr3. Substrate contacts are provided by residues Arg10–Asn17, Cys23–Gly24, Arg62, Glu89–Tyr92, Lys100, and Arg116–Arg117. The Tele-phosphohistidine intermediate role is filled by His11. At Ser14 the chain carries Phosphoserine. The Proton donor/acceptor role is filled by Glu89. Phosphoserine is present on Ser118. Thr121 carries the post-translational modification Phosphothreonine. 2 positions are modified to phosphotyrosine: Tyr132 and Tyr133. Ser135 is modified (phosphoserine). Phosphothreonine is present on Thr152. Gly187–Asn188 lines the substrate pocket.

The protein belongs to the phosphoglycerate mutase family. BPG-dependent PGAM subfamily. Homodimer. Interacts with ENO1. Expressed in the testes (at protein level).

The enzyme catalyses (2R)-2-phosphoglycerate = (2R)-3-phosphoglycerate. It carries out the reaction (2R)-3-phospho-glyceroyl phosphate = (2R)-2,3-bisphosphoglycerate + H(+). In terms of biological role, interconversion of 3- and 2-phosphoglycerate with 2,3-bisphosphoglycerate as the primer of the reaction. Can also catalyze the reaction of EC 5.4.2.4 (synthase), but with a reduced activity. The polypeptide is Phosphoglycerate mutase 2 (Pgam2) (Mus musculus (Mouse)).